The sequence spans 157 residues: 2-C-methyl-D-erythritol 2,4-cyclodiphosphate synthase (157 aa).

Residues Asp8 and His10 each coordinate a divalent metal cation. 4-CDP-2-C-methyl-D-erythritol 2-phosphate contacts are provided by residues 8-10 (DVH) and 34-35 (HS). An a divalent metal cation-binding site is contributed by His42. 4-CDP-2-C-methyl-D-erythritol 2-phosphate contacts are provided by residues 56–58 (DIG), 61–65 (FPDNE), 132–135 (TTTE), Phe139, and Arg142.

Belongs to the IspF family. As to quaternary structure, homotrimer. A divalent metal cation serves as cofactor.

The enzyme catalyses 4-CDP-2-C-methyl-D-erythritol 2-phosphate = 2-C-methyl-D-erythritol 2,4-cyclic diphosphate + CMP. It participates in isoprenoid biosynthesis; isopentenyl diphosphate biosynthesis via DXP pathway; isopentenyl diphosphate from 1-deoxy-D-xylulose 5-phosphate: step 4/6. Its function is as follows. Involved in the biosynthesis of isopentenyl diphosphate (IPP) and dimethylallyl diphosphate (DMAPP), two major building blocks of isoprenoid compounds. Catalyzes the conversion of 4-diphosphocytidyl-2-C-methyl-D-erythritol 2-phosphate (CDP-ME2P) to 2-C-methyl-D-erythritol 2,4-cyclodiphosphate (ME-CPP) with a corresponding release of cytidine 5-monophosphate (CMP). The protein is 2-C-methyl-D-erythritol 2,4-cyclodiphosphate synthase of Desulforamulus reducens (strain ATCC BAA-1160 / DSM 100696 / MI-1) (Desulfotomaculum reducens).